Here is a 430-residue protein sequence, read N- to C-terminus: Adenylosuccinate synthetase (430 aa).

GTP contacts are provided by residues 12–18 (GDEGKGK) and 40–42 (GHT). The Proton acceptor role is filled by Asp13. Positions 13 and 40 each coordinate Mg(2+). Residues 13–16 (DEGK), 38–41 (NAGH), Thr128, Arg142, Gln223, Thr238, and Arg302 contribute to the IMP site. His41 serves as the catalytic Proton donor. 298-304 (TTTGRPR) is a substrate binding site. GTP contacts are provided by residues Arg304, 330–332 (LLD), and 412–414 (SVG).

This sequence belongs to the adenylosuccinate synthetase family. In terms of assembly, homodimer. Mg(2+) is required as a cofactor.

It is found in the cytoplasm. It catalyses the reaction IMP + L-aspartate + GTP = N(6)-(1,2-dicarboxyethyl)-AMP + GDP + phosphate + 2 H(+). It functions in the pathway purine metabolism; AMP biosynthesis via de novo pathway; AMP from IMP: step 1/2. Its function is as follows. Plays an important role in the de novo pathway of purine nucleotide biosynthesis. Catalyzes the first committed step in the biosynthesis of AMP from IMP. The sequence is that of Adenylosuccinate synthetase from Listeria welshimeri serovar 6b (strain ATCC 35897 / DSM 20650 / CCUG 15529 / CIP 8149 / NCTC 11857 / SLCC 5334 / V8).